A 964-amino-acid chain; its full sequence is DNA primase (964 aa).

The disordered stretch occupies residues 807-844 (SAPSLPTLVGRGGGGEGGASSDYEEERAVGSDEEEDDD).

The protein belongs to the herpesviridae DNA primase family. In terms of assembly, associates with the helicase and the primase-associated factor to form the helicase-primase factor.

It localises to the host nucleus. Its function is as follows. Essential component of the helicase/primase complex. Unwinds the DNA at the replication forks and generates single-stranded DNA for both leading and lagging strand synthesis. The primase initiates primer synthesis and thereby produces large amount of short RNA primers on the lagging strand that the polymerase elongates using dNTPs. The sequence is that of DNA primase (UL70) from Mus musculus (Mouse).